Reading from the N-terminus, the 110-residue chain is uncharacterized protein (110 aa).

The tract at residues 1–72 (MWRSSNQRGV…NHRNIHLRNP (72 aa)) is disordered. Positions 10 to 23 (VSRRRDKSMRKYTR) are enriched in basic residues. The span at 48-57 (KNTYTGNISS) shows a compositional bias: polar residues.

This is an uncharacterized protein from Human herpesvirus 6A (strain Uganda-1102) (HHV-6 variant A).